A 143-amino-acid chain; its full sequence is Aspartate 1-decarboxylase (143 aa).

Ser25 serves as the catalytic Schiff-base intermediate with substrate; via pyruvic acid. Residue Ser25 is modified to Pyruvic acid (Ser). Thr57 lines the substrate pocket. The Proton donor role is filled by Tyr58. 73–75 (GAA) lines the substrate pocket.

The protein belongs to the PanD family. In terms of assembly, heterooctamer of four alpha and four beta subunits. Requires pyruvate as cofactor. Is synthesized initially as an inactive proenzyme, which is activated by self-cleavage at a specific serine bond to produce a beta-subunit with a hydroxyl group at its C-terminus and an alpha-subunit with a pyruvoyl group at its N-terminus.

Its subcellular location is the cytoplasm. The catalysed reaction is L-aspartate + H(+) = beta-alanine + CO2. It participates in cofactor biosynthesis; (R)-pantothenate biosynthesis; beta-alanine from L-aspartate: step 1/1. In terms of biological role, catalyzes the pyruvoyl-dependent decarboxylation of aspartate to produce beta-alanine. This is Aspartate 1-decarboxylase from Mycolicibacterium paratuberculosis (strain ATCC BAA-968 / K-10) (Mycobacterium paratuberculosis).